Consider the following 102-residue polypeptide: Small ribosomal subunit protein uS10 (102 aa).

The protein belongs to the universal ribosomal protein uS10 family. Part of the 30S ribosomal subunit.

Its function is as follows. Involved in the binding of tRNA to the ribosomes. This is Small ribosomal subunit protein uS10 from Syntrophus aciditrophicus (strain SB).